The primary structure comprises 78 residues: Small ribosomal subunit protein eS17 (78 aa).

Belongs to the eukaryotic ribosomal protein eS17 family.

The polypeptide is Small ribosomal subunit protein eS17 (Sulfurisphaera tokodaii (strain DSM 16993 / JCM 10545 / NBRC 100140 / 7) (Sulfolobus tokodaii)).